A 432-amino-acid polypeptide reads, in one-letter code: MSILKIHAREIFDSRGNPTVEVDLYTKKGLFRAAVPSGASTGIYEALELRDNDKTRYMGKGVKRAVKYINEFLAPALCNQDVTVIEQEKIDKLMLDMDGTENKYKFGANAILGVSLAVCKAGAAEKGVPLYRHIADLAGNPEVILPVPAFNVINGGSHAGNKLAMQEFMILPVGASSFKDAMRIGAEVYHNLKNVIKEKYGKDATNVGDEGGFAPNILENKEALKLLKNAIGKAGYTDKIVIGMDVAASEFYKGGKYDLDFKSPDDPSRYIPSDKLADLYKGFVKDYPVVSIEDPFDQDDWEAWSKFTASTSIQVVGDDLTVTNPKRIAKGVAEKSCNCLLLKVNQIGSVTESLQACKMAQSSGWGVMVSHRSGETEDTLISDLVVGLCTGQIKTGAPCRSERLAKYNQLMRIEEELGAKAKFAGKNFRHPI.

Ser40 contacts Mg(2+). Substrate-binding residues include His158 and Glu167. Glu210 functions as the Proton donor in the catalytic mechanism. Asp245, Glu293, and Asp318 together coordinate Mg(2+). Residues Glu293 and Asp318 each coordinate substrate. Lys343 acts as the Proton acceptor in catalysis. Residues 370–373 (SHRS) and Lys394 each bind substrate.

This sequence belongs to the enolase family. As to quaternary structure, dimer. Mg(2+) is required as a cofactor.

It is found in the cytoplasm. It catalyses the reaction (2R)-2-phosphoglycerate = phosphoenolpyruvate + H2O. The protein operates within carbohydrate degradation; glycolysis; pyruvate from D-glyceraldehyde 3-phosphate: step 4/5. Its function is as follows. Multifunctional enzyme that, as well as its role in glycolysis, plays a part in various processes such as growth control, hypoxia tolerance and allergic responses. This Thunnus albacares (Yellowfin tuna) protein is Alpha-enolase.